The chain runs to 352 residues: Spermidine/putrescine import ATP-binding protein PotA (352 aa).

The 231-residue stretch at 7–237 (IRLENVTKSF…PVNAFVADFI (231 aa)) folds into the ABC transporter domain. 39–46 (GPSGCGKT) lines the ATP pocket.

It belongs to the ABC transporter superfamily. Spermidine/putrescine importer (TC 3.A.1.11.1) family. In terms of assembly, the complex is composed of two ATP-binding proteins (PotA), two transmembrane proteins (PotB and PotC) and a solute-binding protein (PotD).

The protein localises to the cell membrane. The enzyme catalyses ATP + H2O + polyamine-[polyamine-binding protein]Side 1 = ADP + phosphate + polyamineSide 2 + [polyamine-binding protein]Side 1.. In terms of biological role, part of the ABC transporter complex PotABCD involved in spermidine/putrescine import. Responsible for energy coupling to the transport system. This is Spermidine/putrescine import ATP-binding protein PotA from Acetivibrio thermocellus (strain ATCC 27405 / DSM 1237 / JCM 9322 / NBRC 103400 / NCIMB 10682 / NRRL B-4536 / VPI 7372) (Clostridium thermocellum).